The following is a 616-amino-acid chain: Dihydroxy-acid dehydratase (616 aa).

Asp81 is a binding site for Mg(2+). Cys122 is a binding site for [2Fe-2S] cluster. Mg(2+) contacts are provided by Asp123 and Lys124. Residue Lys124 is modified to N6-carboxylysine. Cys195 is a [2Fe-2S] cluster binding site. Glu491 provides a ligand contact to Mg(2+). The active-site Proton acceptor is the Ser517.

It belongs to the IlvD/Edd family. In terms of assembly, homodimer. Requires [2Fe-2S] cluster as cofactor. Mg(2+) serves as cofactor.

The enzyme catalyses (2R)-2,3-dihydroxy-3-methylbutanoate = 3-methyl-2-oxobutanoate + H2O. It catalyses the reaction (2R,3R)-2,3-dihydroxy-3-methylpentanoate = (S)-3-methyl-2-oxopentanoate + H2O. Its pathway is amino-acid biosynthesis; L-isoleucine biosynthesis; L-isoleucine from 2-oxobutanoate: step 3/4. It functions in the pathway amino-acid biosynthesis; L-valine biosynthesis; L-valine from pyruvate: step 3/4. Functions in the biosynthesis of branched-chain amino acids. Catalyzes the dehydration of (2R,3R)-2,3-dihydroxy-3-methylpentanoate (2,3-dihydroxy-3-methylvalerate) into 2-oxo-3-methylpentanoate (2-oxo-3-methylvalerate) and of (2R)-2,3-dihydroxy-3-methylbutanoate (2,3-dihydroxyisovalerate) into 2-oxo-3-methylbutanoate (2-oxoisovalerate), the penultimate precursor to L-isoleucine and L-valine, respectively. The chain is Dihydroxy-acid dehydratase from Salmonella agona (strain SL483).